Reading from the N-terminus, the 333-residue chain is MRTIAIDAMGGDNAPEAIVEAVLKAKAEMPDTKFLLFGDKEQLRKLIPSDQINDQLGVVATTEIIADEDEPVKAIRRKKDSSMVVAANFVKEGKADALLSLGNTGALLACGIFIIGRIKGIARPGLMPTLPVQNSDDGFNMVDVGANAKSKPEFLLQWAEMASYYAEKIRGIQNPRIMLLNNGSESDKGDDVHQAAYELLKDSDLNFQGNIEGNELLLGKADVVVTDGFTGNAVLKNIEGTSSFILHILKDSLLNGGVMTKLGALMVNGSLSSLKSKFDTAKYGGAILLGVNAPVVKTHGRSNESPIYFTLKQVDKMIKENLVQDFKDEFATK.

The protein belongs to the PlsX family. Homodimer. Probably interacts with PlsY.

The protein resides in the cytoplasm. The catalysed reaction is a fatty acyl-[ACP] + phosphate = an acyl phosphate + holo-[ACP]. It participates in lipid metabolism; phospholipid metabolism. Functionally, catalyzes the reversible formation of acyl-phosphate (acyl-PO(4)) from acyl-[acyl-carrier-protein] (acyl-ACP). This enzyme utilizes acyl-ACP as fatty acyl donor, but not acyl-CoA. In Lactobacillus helveticus (strain DPC 4571), this protein is Phosphate acyltransferase.